The following is a 276-amino-acid chain: Secretagogin (276 aa).

6 EF-hand domains span residues L12–K47, N58–N93, D105–H140, K149–F184, E197–L232, and V240–P276. Ca(2+) contacts are provided by D71, S73, D75, H77, E82, D118, D120, S122, E129, D162, N164, D166, R168, D173, D210, S212, T214, E221, D254, N256, D258, K260, and E265.

It localises to the cytoplasm. The protein localises to the secreted. It is found in the cytoplasmic vesicle. Its subcellular location is the secretory vesicle membrane. The protein is Secretagogin (SCGN) of Sus scrofa (Pig).